We begin with the raw amino-acid sequence, 916 residues long: MTQPTIKIGLWMHRGLTRGSEELRLFLSVHNIDVMLVTESHMREGQRIFLPGYSTYHVFHPSGNSRGGASVIVRSSISHSPQPPISTNDRQIAYIQLQTAEGPVVLAAVYLPPRERWIRAEFESLFAVLGNKFIAGGDYNAKHAWWGNSRACARGKVLQEVVANGQYQILATGEPTFYSYNPLVSPSALDFFVVNGYDMRRLNVQTLHELSSDHTPLLADLHAMPINKPPRSCLLARGADIERFKAYLTQHIDLSVGIQGTDDIDNAIDSFMDILKRAAIRSAPSHQQNVESSRQLQLPPIVASLIRLKRKVRREYARTGDARIQQIHSRLANRLHKVLNRRKQSQIDNLLENLDTDGSTNFSLWRITKRYKTQATPNSAIRNPAGGWCRTSREKTEVFANHLEQRFKALAFAPESHSLMVAESLQTPFQMALPADPVTLEEVKELVSKLKPKKAPGEDLLDNRTIRLLPDQALLYLVLIFNSILRVGYFPKARPTASIIMILKPGKQPLDVDSYRPTSLLPSLGKMLERLILNRILTSEEVTRAIPKFQFGFRLQHGTPEQLHRVVNFALEALEKKEYAGSCFLDIQQAFDRVWHPGLLYKAKSLLSPQLFQLIKSFWEGRKFSVTADGCRSSVKFIEAGVPQGSVLGPTLYSIFTADMPNQNAVTGLAEGEVLIATYADDIAVLTKSTCIVEATDALQEYLDAFQEWAVKWNVSINAGKCANVTFTNAIRDCPGVTINGSLLSHTHEYKYLGVILDRSLTFRRHITSLQHSFRTRITKMNWLLAARNKLSLDNKVKIYKCIVAPGLFYAIQVYGIAARTHLNKIRVLQAKMLRKISGAPWYMRTRDIECDLKVPKIGDKIREVAKKYHERLDSHPNSLARRLGVAAQRSASPRSRVRRRLKRHHPQDLLDRALT.

Positions 483-757 constitute a Reverse transcriptase domain; that stretch reads SILRVGYFPK…HEYKYLGVIL (275 aa). A disordered region spans residues 890–916; it reads RSASPRSRVRRRLKRHHPQDLLDRALT. Residues 896-906 show a composition bias toward basic residues; that stretch reads SRVRRRLKRHH. Over residues 907–916 the composition is skewed to basic and acidic residues; that stretch reads PQDLLDRALT.

It depends on Mg(2+) as a cofactor. Mn(2+) serves as cofactor.

It carries out the reaction DNA(n) + a 2'-deoxyribonucleoside 5'-triphosphate = DNA(n+1) + diphosphate. Inactivated by sulphydryl reagent. The chain is RNA-directed DNA polymerase from mobile element jockey (jockey\pol) from Drosophila funebris (Fruit fly).